Reading from the N-terminus, the 140-residue chain is Nucleoside diphosphate kinase (140 aa).

ATP is bound by residues Lys-11, Phe-59, Arg-87, Thr-93, Arg-104, and Asn-114. Residue His-117 is the Pros-phosphohistidine intermediate of the active site.

The protein belongs to the NDK family. Homotetramer. It depends on Mg(2+) as a cofactor.

It localises to the cytoplasm. The catalysed reaction is a 2'-deoxyribonucleoside 5'-diphosphate + ATP = a 2'-deoxyribonucleoside 5'-triphosphate + ADP. The enzyme catalyses a ribonucleoside 5'-diphosphate + ATP = a ribonucleoside 5'-triphosphate + ADP. Functionally, major role in the synthesis of nucleoside triphosphates other than ATP. The ATP gamma phosphate is transferred to the NDP beta phosphate via a ping-pong mechanism, using a phosphorylated active-site intermediate. The polypeptide is Nucleoside diphosphate kinase (Francisella tularensis subsp. mediasiatica (strain FSC147)).